The following is a 119-amino-acid chain: MKLYLVILVTSVALAAASPTRTKEEPIEDELLEALLSVEKSLFNEETTVMEKRSCVIGWKQRGQKCERDCECCGVAATCIGERMPGFCGYRTTNNNLGQYILYGYSTVSNGVSAILCAA.

An N-terminal signal peptide occupies residues M1 to A17. A propeptide spanning residues S18–R53 is cleaved from the precursor. 4 disulfides stabilise this stretch: C55–C73, C66–C79, C70–C117, and C72–C88.

It belongs to the neurotoxin 03 (Tx2) family. 03 subfamily. Expressed by the venom gland.

Its subcellular location is the secreted. Its function is as follows. Probable ion channel inhibitor. The sequence is that of U9-hexatoxin-Hi1 from Hadronyche infensa (Fraser island funnel-web spider).